Here is a 297-residue protein sequence, read N- to C-terminus: 4-hydroxy-tetrahydrodipicolinate synthase (297 aa).

T47 is a pyruvate binding site. The Proton donor/acceptor role is filled by Y136. K165 (schiff-base intermediate with substrate) is an active-site residue. T206 is a binding site for pyruvate.

It belongs to the DapA family. As to quaternary structure, homotetramer; dimer of dimers.

It is found in the cytoplasm. It catalyses the reaction L-aspartate 4-semialdehyde + pyruvate = (2S,4S)-4-hydroxy-2,3,4,5-tetrahydrodipicolinate + H2O + H(+). It functions in the pathway amino-acid biosynthesis; L-lysine biosynthesis via DAP pathway; (S)-tetrahydrodipicolinate from L-aspartate: step 3/4. Its function is as follows. Catalyzes the condensation of (S)-aspartate-beta-semialdehyde [(S)-ASA] and pyruvate to 4-hydroxy-tetrahydrodipicolinate (HTPA). The sequence is that of 4-hydroxy-tetrahydrodipicolinate synthase from Sulfurovum sp. (strain NBC37-1).